We begin with the raw amino-acid sequence, 505 residues long: Protein disulfide-isomerase A3 (505 aa).

The N-terminal stretch at 1–24 (MSVPRPSRAALLLLVPLLALSAGA) is a signal peptide. 2 Thioredoxin domains span residues 25–131 (SDVV…KQAG) and 341–483 (SRDG…REAT). Catalysis depends on nucleophile residues Cys-55 and Cys-58. 3 disulfide bridges follow: Cys-55–Cys-58, Cys-83–Cys-90, and Cys-404–Cys-407. Residues Cys-404 and Cys-407 each act as nucleophile in the active site. Positions 486–505 (PVLQEEDKAKKSKKKAKEDL) are disordered. A compositionally biased stretch (basic residues) spans 495–505 (KKSKKKAKEDL). The short motif at 502–505 (KEDL) is the Prevents secretion from ER element.

It belongs to the protein disulfide isomerase family.

The protein resides in the endoplasmic reticulum. Its subcellular location is the endoplasmic reticulum lumen. It is found in the melanosome. It carries out the reaction Catalyzes the rearrangement of -S-S- bonds in proteins.. In terms of biological role, protein disulfide isomerase that catalyzes the formation, isomerization, and reduction or oxidation of disulfide bonds in client proteins and functions as a protein folding chaperone. This chain is Protein disulfide-isomerase A3 (PDIA3), found in Gallus gallus (Chicken).